The chain runs to 280 residues: Protein MGF 505-3R (280 aa).

The protein belongs to the asfivirus MGF 505 family.

In terms of biological role, plays a role in virus cell tropism, and may be required for efficient virus replication in macrophages. The sequence is that of Protein MGF 505-3R from Ornithodoros (relapsing fever ticks).